Reading from the N-terminus, the 636-residue chain is 1-deoxy-D-xylulose-5-phosphate synthase (636 aa).

Thiamine diphosphate contacts are provided by residues His-75 and 116–118 (AHS). Position 147 (Asp-147) interacts with Mg(2+). Residues 148–149 (GA), Asn-177, Tyr-288, and Glu-370 each bind thiamine diphosphate. Residue Asn-177 coordinates Mg(2+).

The protein belongs to the transketolase family. DXPS subfamily. Homodimer. Requires Mg(2+) as cofactor. Thiamine diphosphate is required as a cofactor.

It catalyses the reaction D-glyceraldehyde 3-phosphate + pyruvate + H(+) = 1-deoxy-D-xylulose 5-phosphate + CO2. The protein operates within metabolic intermediate biosynthesis; 1-deoxy-D-xylulose 5-phosphate biosynthesis; 1-deoxy-D-xylulose 5-phosphate from D-glyceraldehyde 3-phosphate and pyruvate: step 1/1. Its function is as follows. Catalyzes the acyloin condensation reaction between C atoms 2 and 3 of pyruvate and glyceraldehyde 3-phosphate to yield 1-deoxy-D-xylulose-5-phosphate (DXP). This Ralstonia pickettii (strain 12J) protein is 1-deoxy-D-xylulose-5-phosphate synthase.